The following is a 275-amino-acid chain: MGIRIYKSYTPGTRNRSSSDFVEITKSKPEKSLLRKKLSCAGRNNRGLITVRHKGGGHKQRYRLVDFKRNKLDIPAIVASVEYDPNRNARIALLHYQDGEKRYILHPKKLAVGDKIYSGINVPIEIGNAMPLYNVPLGTAVHNVELIPGRGGQIVRSAGTSAQVVAKDGQVVTIKMPSNEVRMIYKNCYATIGEVGNADIKNIRLGKAGRKRWLGIRPSVRGVVMNPCDHPHGGGEGRSPIGRAKPVTPWGKPALGVKTRRQNKYSDFCIIRSRN.

A disordered region spans residues 225–252; sequence MNPCDHPHGGGEGRSPIGRAKPVTPWGK.

Belongs to the universal ribosomal protein uL2 family. As to quaternary structure, part of the 50S ribosomal subunit.

The protein resides in the plastid. Its subcellular location is the chloroplast. The polypeptide is Large ribosomal subunit protein uL2c (rpl2) (Guillardia theta (Cryptophyte)).